Here is a 259-residue protein sequence, read N- to C-terminus: Probable kinetochore protein spc25 (259 aa).

Polar residues predominate over residues 1-20; it reads MSRKSVMSSTFEPSLSTSRQ. Positions 1–25 are disordered; that stretch reads MSRKSVMSSTFEPSLSTSRQPLGPS. Positions 59–162 form a coiled coil; the sequence is RKRVLEERNQ…HAAQLEAQAR (104 aa).

It belongs to the SPC25 family. In terms of assembly, component of the NDC80 complex, which consists of kpr-1/ndc80, kpr-2/nuf2, kpr-3/spc24 and kpr-4/spc25.

It localises to the nucleus. The protein localises to the chromosome. It is found in the centromere. Its subcellular location is the kinetochore. Its function is as follows. Acts as a component of the essential kinetochore-associated NDC80 complex, which is required for chromosome segregation and spindle checkpoint activity. This chain is Probable kinetochore protein spc25 (kpr-4), found in Neurospora crassa (strain ATCC 24698 / 74-OR23-1A / CBS 708.71 / DSM 1257 / FGSC 987).